A 645-amino-acid chain; its full sequence is E3 ubiquitin-protein ligase ORTHRUS 2 (645 aa).

The segment at 12-63 adopts a PHD-type zinc-finger fold; that stretch reads DGVCMRCKSNPPPEESLTCGTCVTPWHVSCLSSPPKTLASTLQWHCPDCSGE. Residues 96-133 form a disordered region; the sequence is LSTEEKAKMRQRLLSGKGVEEDDEEEKRKKKGKGKNPN. An RING-type 1 zinc finger spans residues 146–185; that stretch reads CSFCMQLPERPVTKPCGHNACLKCFEKWMGQGKRTCGKCR. The YDG domain occupies 273–422; it reads VRNQGLLVGE…FKVCRYLFVR (150 aa). Residues 518–575 form an RING-type 2 zinc finger; it reads CQICQQVLTLPVTTPCAHNFCKACLEAKFAGKTLVRERSTGGRTLRSRKNVLNCPCCP. Positions 583 to 613 form a coiled coil; that stretch reads QNPQVNREVAEVIEKLKTQEEDTAELEDEDE. The segment at 599–645 is disordered; that stretch reads KTQEEDTAELEDEDEGECSGTTPEEDSEQPKKRIKLDTDATVSATIR. The span at 603–625 shows a compositional bias: acidic residues; it reads EDTAELEDEDEGECSGTTPEEDS. Positions 626–636 are enriched in basic and acidic residues; sequence EQPKKRIKLDT.

In terms of assembly, interacts with histones CENH3, HTB2, HTR3 and H4. In terms of tissue distribution, mostly expressed in inflorescence and, to a lower extent, in leaves.

It is found in the nucleus. It carries out the reaction S-ubiquitinyl-[E2 ubiquitin-conjugating enzyme]-L-cysteine + [acceptor protein]-L-lysine = [E2 ubiquitin-conjugating enzyme]-L-cysteine + N(6)-ubiquitinyl-[acceptor protein]-L-lysine.. The protein operates within protein modification; protein ubiquitination. Its function is as follows. E3 ubiquitin-protein ligase. Participates in CpG methylation-dependent transcriptional regulation and epigenetic transcriptional silencing. Mediates ubiquitination with the E2 ubiquitin-conjugating enzyme UBC11. Promotes methylation-mediated gene silencing leading, for example, to early flowering. Associates with methylated DNA, and can bind to CpG, CpNpG, and CpNpN DNA motifs, with a strong preference for methylated forms, and with highest affinity for CpG substrate. Probably acts at the DNA methylation?histone interface to maintain centromeric heterochromatin. This chain is E3 ubiquitin-protein ligase ORTHRUS 2 (ORTH2), found in Arabidopsis thaliana (Mouse-ear cress).